The following is a 141-amino-acid chain: MEQPTSSTNGEKTKSPCESNNKKNDEMQEVPNRVLAPEQSLKNTKTSEYPIIFVYYLRKGKKINSNQLENEQSQENSINPIQKEEDEGVDLSEGSSNEDEDLGPCEGPSKEDKDLDSSEGSSQEDEDLGLSEGSSQDSGED.

Polar residues predominate over residues 1–10; that stretch reads MEQPTSSTNG. Disordered regions lie at residues 1-47 and 66-141; these read MEQP…TKTS and NQLE…SGED. Residues 11 to 26 show a composition bias toward basic and acidic residues; it reads EKTKSPCESNNKKNDE. Residues 66-80 show a composition bias toward polar residues; sequence NQLENEQSQENSINP. The segment covering 84 to 103 has biased composition (acidic residues); sequence EEDEGVDLSEGSSNEDEDLG. Over residues 132–141 the composition is skewed to polar residues; that stretch reads EGSSQDSGED.

The protein belongs to the SPAN-X family.

The chain is Sperm protein associated with the nucleus on the X chromosome N3 (SPANXN3) from Homo sapiens (Human).